We begin with the raw amino-acid sequence, 905 residues long: Alanine--tRNA ligase (905 aa).

Zn(2+) is bound by residues His-582, His-586, Cys-687, and His-691.

The protein belongs to the class-II aminoacyl-tRNA synthetase family. Requires Zn(2+) as cofactor.

The protein localises to the cytoplasm. It carries out the reaction tRNA(Ala) + L-alanine + ATP = L-alanyl-tRNA(Ala) + AMP + diphosphate. Its function is as follows. Catalyzes the attachment of alanine to tRNA(Ala) in a two-step reaction: alanine is first activated by ATP to form Ala-AMP and then transferred to the acceptor end of tRNA(Ala). Also edits incorrectly charged Ser-tRNA(Ala) and Gly-tRNA(Ala) via its editing domain. The polypeptide is Alanine--tRNA ligase (Mycoplasma mobile (strain ATCC 43663 / 163K / NCTC 11711) (Mesomycoplasma mobile)).